The following is a 542-amino-acid chain: MFS-type efflux pump MMF1 (542 aa).

8 helical membrane passes run 24–44 (WTIF…MTMI), 51–71 (IVAA…AFLL), 98–118 (VIFL…VLVV), 124–144 (GLGG…LTTL), 151–171 (FGLI…LGGV), 179–199 (WIFW…VLFL), 215–235 (LDLV…IAVT), and 248–268 (VWVP…VEWI). N285 is a glycosylation site (N-linked (GlcNAc...) asparagine). Transmembrane regions (helical) follow at residues 296–316 (FLHG…FQAI), 326–346 (IWSF…GLLI), 355–375 (LIFI…HWSV), 384–404 (ISQI…LPPI), 419–439 (AYAF…TTIF), and 490–510 (ISDS…STFL).

The protein belongs to the major facilitator superfamily.

It is found in the cell membrane. Glycosyltransferase; part of the gene cluster that mediates the biosynthesis of mannosylerythritol lipids (MELs), surface-active substances that enhance the availability of water-insoluble substrates. MMF1 is directly involved in the secretiopn of MALs. The chain is MFS-type efflux pump MMF1 from Pseudozyma antarctica (strain T-34) (Yeast).